The following is a 262-amino-acid chain: Hydroxyethylthiazole kinase (262 aa).

M50 contacts substrate. ATP contacts are provided by R125 and T171. G198 lines the substrate pocket.

The protein belongs to the Thz kinase family. The cofactor is Mg(2+).

The enzyme catalyses 5-(2-hydroxyethyl)-4-methylthiazole + ATP = 4-methyl-5-(2-phosphooxyethyl)-thiazole + ADP + H(+). The protein operates within cofactor biosynthesis; thiamine diphosphate biosynthesis; 4-methyl-5-(2-phosphoethyl)-thiazole from 5-(2-hydroxyethyl)-4-methylthiazole: step 1/1. Functionally, catalyzes the phosphorylation of the hydroxyl group of 4-methyl-5-beta-hydroxyethylthiazole (THZ). The sequence is that of Hydroxyethylthiazole kinase from Citrobacter koseri (strain ATCC BAA-895 / CDC 4225-83 / SGSC4696).